Here is a 469-residue protein sequence, read N- to C-terminus: Protein RUFY3 (469 aa).

T5 and T12 each carry phosphothreonine. Residues S34 and S49 each carry the phosphoserine modification. Position 51 is a phosphothreonine (T51). The 133-residue stretch at 95–227 (DSDYAPLQQF…IDANFCMKGE (133 aa)) folds into the RUN domain. 2 coiled-coil regions span residues 271 to 362 (NRHL…VEKE) and 422 to 463 (KSEL…AANK).

In terms of assembly, interacts with PAK1. Interacts (via C-terminus) with Ras-related Rab-5 proteins. Interacts (via C-terminus) with Ras-related Rap-2 proteins. Interacts with PIK3CA and PIK3R1. Interacts (via N-terminus) with FSCN1; this interaction induces neuron axon development. Interacts with DBN1. Interacts (via the second coiled coil) with GTP-, but not GDP-bound ARL8A and ARL8B. Interacts with dynactin/DCTN1 and the dynein intermediate chain DYNC1I1/2. Directly interacts with DYNC1LI1. Phosphorylated by PAK1.

It is found in the cytoplasm. Its subcellular location is the endomembrane system. It localises to the cell projection. The protein resides in the invadopodium. The protein localises to the growth cone. It is found in the perikaryon. Its subcellular location is the filopodium. It localises to the lamellipodium. The protein resides in the lysosome. Its function is as follows. ARL8 effector that promotes the coupling of endolysosomes to dynein-dynactin for retrograde transport along microtubules. Acts by binding both GTP-bound ARL8 and dynein-dynactin. In nonneuronal cells, promotes concentration of endolysosomes in the juxtanuclear area. In hippocampal neurons, drives retrograde transport of endolysosomes from the axon to the soma. Plays a role in the generation of neuronal polarity formation and axon growth. Implicated in the formation of a single axon by developing neurons. May inhibit the formation of additional axons by inhibition of PI3K in minor neuronal processes. Plays a role in the formation of F-actin-enriched protrusive structures at the cell periphery. Plays a role in cytoskeletal organization by regulating the subcellular localization of FSCN1 and DBN1 at axonal growth cones. In Pongo abelii (Sumatran orangutan), this protein is Protein RUFY3.